We begin with the raw amino-acid sequence, 156 residues long: Large ribosomal subunit protein uL15 (156 aa).

The segment at 25–48 is disordered; that stretch reads RGIGCGKGKTSGRGHKGQKARSGV. Basic residues predominate over residues 34-43; the sequence is TSGRGHKGQK.

The protein belongs to the universal ribosomal protein uL15 family. Part of the 50S ribosomal subunit.

Functionally, binds to the 23S rRNA. This is Large ribosomal subunit protein uL15 from Wolbachia pipientis wMel.